A 426-amino-acid chain; its full sequence is Histidine--tRNA ligase (426 aa).

This sequence belongs to the class-II aminoacyl-tRNA synthetase family. As to quaternary structure, homodimer.

Its subcellular location is the cytoplasm. The enzyme catalyses tRNA(His) + L-histidine + ATP = L-histidyl-tRNA(His) + AMP + diphosphate + H(+). This chain is Histidine--tRNA ligase, found in Streptococcus agalactiae serotype III (strain NEM316).